Consider the following 846-residue polypeptide: Protein kintoun (846 aa).

4 disordered regions span residues 216 to 240 (TAEE…GKPE), 372 to 405 (LRHF…DSKA), 574 to 631 (QALK…ESAC), and 762 to 846 (KKNQ…EMDD). Residues 372 to 382 (LRHFSREDSGV) are compositionally biased toward basic and acidic residues. A Phosphoserine modification is found at serine 380. A compositionally biased stretch (acidic residues) spans 391-400 (PVEEDPDGEL). Residues 583–603 (GTKEEEEKGNQDQEPESDKQH) show a composition bias toward basic and acidic residues. 2 stretches are compositionally biased toward basic residues: residues 611-622 (KAGKKQRKRNKK) and 762-776 (KKNQ…RAQQ). Residue serine 780 is modified to Phosphoserine. The span at 795–809 (LKQQENQSRNCNKPN) shows a compositional bias: polar residues.

This sequence belongs to the PIH1 family. Kintoun subfamily. Interacts with Pp1alpha-96A, Pp1-87B, Pp1-13C and flw.

The protein localises to the cytoplasm. Functionally, required for cytoplasmic pre-assembly of axonemal dyneins, thereby playing a central role in motility in cilia and flagella. Involved in pre-assembly of dynein arm complexes in the cytoplasm before intraflagellar transport loads them for the ciliary compartment. This is Protein kintoun from Drosophila yakuba (Fruit fly).